The chain runs to 427 residues: Adenylosuccinate synthetase (427 aa).

GTP is bound by residues 12-18 and 40-42; these read GDEGKGK and GHT. Aspartate 13 (proton acceptor) is an active-site residue. Residues aspartate 13 and glycine 40 each coordinate Mg(2+). Residues 13 to 16, 38 to 41, threonine 128, arginine 142, glutamine 223, threonine 238, and arginine 302 each bind IMP; these read DEGK and NAGH. Histidine 41 serves as the catalytic Proton donor. 298–304 is a binding site for substrate; it reads TTTGRPR. Residues arginine 304, 330–332, and 412–414 each bind GTP; these read SID and SVG.

The protein belongs to the adenylosuccinate synthetase family. In terms of assembly, homodimer. Mg(2+) serves as cofactor.

It is found in the cytoplasm. The catalysed reaction is IMP + L-aspartate + GTP = N(6)-(1,2-dicarboxyethyl)-AMP + GDP + phosphate + 2 H(+). Its pathway is purine metabolism; AMP biosynthesis via de novo pathway; AMP from IMP: step 1/2. Functionally, plays an important role in the de novo pathway of purine nucleotide biosynthesis. Catalyzes the first committed step in the biosynthesis of AMP from IMP. This Staphylococcus epidermidis (strain ATCC 12228 / FDA PCI 1200) protein is Adenylosuccinate synthetase.